We begin with the raw amino-acid sequence, 220 residues long: Exodeoxyribonuclease 10 (220 aa).

Mg(2+) is required as a cofactor.

Functionally, capable of degrading both single-strand and double-strand DNA with 3' to 5' polarity. Has higher affinity for ssDNA ends than for dsDNA. This is Exodeoxyribonuclease 10 (exoX) from Escherichia coli O6:H1 (strain CFT073 / ATCC 700928 / UPEC).